Reading from the N-terminus, the 137-residue chain is Competence protein D (137 aa).

In terms of biological role, involved in transformation (genetic competence for DNA uptake). The protein is Competence protein D (comD) of Haemophilus influenzae (strain ATCC 51907 / DSM 11121 / KW20 / Rd).